The sequence spans 403 residues: Na(+)-translocating NADH-quinone reductase subunit B (403 aa).

9 helical membrane passes run methionine 56–glycine 76, alanine 121–phenylalanine 141, leucine 164–glycine 184, glycine 225–glycine 245, glycine 260–threonine 280, isoleucine 287–serine 307, methionine 312–phenylalanine 332, tryptophan 348–phenylalanine 368, and glycine 371–valine 391. At threonine 230 the chain carries FMN phosphoryl threonine.

It belongs to the NqrB/RnfD family. In terms of assembly, composed of six subunits; NqrA, NqrB, NqrC, NqrD, NqrE and NqrF. FMN is required as a cofactor.

The protein localises to the cell inner membrane. It carries out the reaction a ubiquinone + n Na(+)(in) + NADH + H(+) = a ubiquinol + n Na(+)(out) + NAD(+). Functionally, NQR complex catalyzes the reduction of ubiquinone-1 to ubiquinol by two successive reactions, coupled with the transport of Na(+) ions from the cytoplasm to the periplasm. NqrA to NqrE are probably involved in the second step, the conversion of ubisemiquinone to ubiquinol. The polypeptide is Na(+)-translocating NADH-quinone reductase subunit B (Pseudomonas paraeruginosa (strain DSM 24068 / PA7) (Pseudomonas aeruginosa (strain PA7))).